Consider the following 225-residue polypeptide: Phosphoribosylformylglycinamidine synthase subunit PurQ (225 aa).

The region spanning 6–225 (FGVVVFPGSN…WQSILRSFAA (220 aa)) is the Glutamine amidotransferase type-1 domain. Cysteine 89 acts as the Nucleophile in catalysis. Catalysis depends on residues histidine 198 and glutamate 200.

As to quaternary structure, part of the FGAM synthase complex composed of 1 PurL, 1 PurQ and 2 PurS subunits.

The protein resides in the cytoplasm. The enzyme catalyses N(2)-formyl-N(1)-(5-phospho-beta-D-ribosyl)glycinamide + L-glutamine + ATP + H2O = 2-formamido-N(1)-(5-O-phospho-beta-D-ribosyl)acetamidine + L-glutamate + ADP + phosphate + H(+). It carries out the reaction L-glutamine + H2O = L-glutamate + NH4(+). It functions in the pathway purine metabolism; IMP biosynthesis via de novo pathway; 5-amino-1-(5-phospho-D-ribosyl)imidazole from N(2)-formyl-N(1)-(5-phospho-D-ribosyl)glycinamide: step 1/2. Part of the phosphoribosylformylglycinamidine synthase complex involved in the purines biosynthetic pathway. Catalyzes the ATP-dependent conversion of formylglycinamide ribonucleotide (FGAR) and glutamine to yield formylglycinamidine ribonucleotide (FGAM) and glutamate. The FGAM synthase complex is composed of three subunits. PurQ produces an ammonia molecule by converting glutamine to glutamate. PurL transfers the ammonia molecule to FGAR to form FGAM in an ATP-dependent manner. PurS interacts with PurQ and PurL and is thought to assist in the transfer of the ammonia molecule from PurQ to PurL. This is Phosphoribosylformylglycinamidine synthase subunit PurQ from Synechococcus sp. (strain JA-2-3B'a(2-13)) (Cyanobacteria bacterium Yellowstone B-Prime).